The following is a 192-amino-acid chain: Ion-translocating oxidoreductase complex subunit B (192 aa).

A hydrophobic region spans residues 1–26 (MNTIWIAVAAISLLGLAFGAILGYAS). A 4Fe-4S domain is found at 32–91 (EDDPVVEKIDEILPQSQCGQCGYPGCRPYAEAISCNGEKINRCAPGGEAVMLKISELLNV). [4Fe-4S] cluster-binding residues include Cys-49, Cys-52, Cys-57, Cys-74, Cys-117, Cys-120, Cys-123, Cys-127, Cys-147, Cys-150, Cys-153, and Cys-157. 4Fe-4S ferredoxin-type domains lie at 108 to 137 (VVAVIDENNCIGCTKCIQACPVDAIVGATR) and 138 to 167 (AMHTVMSDLCTGCNLCVDPCPTQCISLQPV).

It belongs to the 4Fe4S bacterial-type ferredoxin family. RnfB subfamily. As to quaternary structure, the complex is composed of six subunits: RsxA, RsxB, RsxC, RsxD, RsxE and RsxG. [4Fe-4S] cluster is required as a cofactor.

It localises to the cell inner membrane. In terms of biological role, part of a membrane-bound complex that couples electron transfer with translocation of ions across the membrane. Required to maintain the reduced state of SoxR. In Escherichia fergusonii (strain ATCC 35469 / DSM 13698 / CCUG 18766 / IAM 14443 / JCM 21226 / LMG 7866 / NBRC 102419 / NCTC 12128 / CDC 0568-73), this protein is Ion-translocating oxidoreductase complex subunit B.